Consider the following 137-residue polypeptide: Large ribosomal subunit protein bL17 (137 aa).

This sequence belongs to the bacterial ribosomal protein bL17 family. Part of the 50S ribosomal subunit. Contacts protein L32.

The sequence is that of Large ribosomal subunit protein bL17 from Caulobacter vibrioides (strain ATCC 19089 / CIP 103742 / CB 15) (Caulobacter crescentus).